A 310-amino-acid polypeptide reads, in one-letter code: Alpha/beta hydrolase domain-containing protein 17C (310 aa).

Catalysis depends on charge relay system residues Ser-192, Asp-257, and His-286.

Belongs to the AB hydrolase superfamily. ABHD17 family. Post-translationally, palmitoylated on cysteine residues located in a cysteine cluster at the N-terminus which promotes membrane localization.

The protein resides in the recycling endosome membrane. The protein localises to the cell projection. Its subcellular location is the dendritic spine. It is found in the postsynaptic density membrane. The enzyme catalyses S-hexadecanoyl-L-cysteinyl-[protein] + H2O = L-cysteinyl-[protein] + hexadecanoate + H(+). Its function is as follows. Hydrolyzes fatty acids from S-acylated cysteine residues in proteins. This is Alpha/beta hydrolase domain-containing protein 17C from Xenopus tropicalis (Western clawed frog).